The following is a 162-amino-acid chain: Caveolin-2 (162 aa).

Over 1-86 (MGLESEKADV…FEISKYVLYK (86 aa)) the chain is Cytoplasmic. Position 19 is a phosphotyrosine (tyrosine 19). Serine 20, serine 23, and serine 36 each carry phosphoserine. The segment at residues 87 to 107 (FLTFFLAIPLAFAAGILFAIL) is an intramembrane region (helical). Topologically, residues 108–162 (SCLHIWIIMPFVKTCLMVLPSVQTIWKSVTDVVIAPLCTSVGRSFSSVSLQLSQD) are cytoplasmic.

Belongs to the caveolin family. Monomer or homodimer. Interacts with CAV1; the interaction forms a stable heterooligomeric complex that is required for targeting to lipid rafts and for caveolae formation. Tyrosine phosphorylated forms do not form heterooligomers with the Tyr-19-phosphorylated form existing as a monomer or dimer. Interacts (tyrosine phosphorylated form) with the SH2 domain-containing proteins, RASA1, NCK1 and SRC. Interacts (tyrosine phosphorylated form) with INSR. Interacts (Tyr-19 phosphorylated form) with MAPK1 (phosphorylated form); the interaction, promoted by insulin, leads to nuclear location and MAPK1 activation. Interacts with STAT3; the interaction is increased on insulin-induced tyrosine phosphorylation leading to STAT activation. Post-translationally, phosphorylated on serine and tyrosine residues. CAV1 promotes phosphorylation on Ser-23 which then targets the complex to the plasma membrane, lipid rafts and caveolae. Phosphorylation on Ser-36 appears to modulate mitosis in endothelial cells. Phosphorylation on Tyr-19 is required for insulin-induced phosphorylation of MAPK1 and DNA binding of STAT3. Tyrosine phosphorylation is induced by both EGF and insulin.

The protein resides in the nucleus. It is found in the golgi apparatus membrane. Its subcellular location is the cell membrane. It localises to the membrane. The protein localises to the caveola. Functionally, may act as a scaffolding protein within caveolar membranes. Interacts directly with G-protein alpha subunits and can functionally regulate their activity. Acts as an accessory protein in conjunction with CAV1 in targeting to lipid rafts and driving caveolae formation. The Ser-36 phosphorylated form has a role in modulating mitosis in endothelial cells. Positive regulator of cellular mitogenesis of the MAPK signaling pathway. Required for the insulin-stimulated nuclear translocation and activation of MAPK1 and STAT3, and the subsequent regulation of cell cycle progression. In Echinops telfairi (Lesser hedgehog tenrec), this protein is Caveolin-2 (CAV2).